Reading from the N-terminus, the 366-residue chain is Aminomethyltransferase (366 aa).

The protein belongs to the GcvT family. As to quaternary structure, the glycine cleavage system is composed of four proteins: P, T, L and H.

The catalysed reaction is N(6)-[(R)-S(8)-aminomethyldihydrolipoyl]-L-lysyl-[protein] + (6S)-5,6,7,8-tetrahydrofolate = N(6)-[(R)-dihydrolipoyl]-L-lysyl-[protein] + (6R)-5,10-methylene-5,6,7,8-tetrahydrofolate + NH4(+). The glycine cleavage system catalyzes the degradation of glycine. This chain is Aminomethyltransferase, found in Bacillus anthracis (strain A0248).